Reading from the N-terminus, the 396-residue chain is MLNNILQFLKERELYSQANFETELDNHLKEKKNNFYVGFDPTANSLHIGNYVLIHIAKLLKDMGHTPHIVLGSATALIGDPTGRIELRKILEEKEIVKNTKTIKKQIKQFLGDVIIHENKVWLEKLNYIEVIRELGAFFSVNKMLSTDAFSARWEKGLTLMELNYMILQAYDFYYLHKNHNVTLQIGGSDQWANILAGANLIKRKNNASVFGLTANLLVKANGEKMGKTSSGALWLDENKTSVFDFYQYWINLDDQSLKKTFLMLTMLDKKVIDELCNLKGPKIKQTKQMLAFLITELIHGTKKAKEAQQRSELIFSNQPDLDIKLVKTSTNLIDYLVETKFIKSKSEARRLISQKGLTINNKHVLDLNQIIEWKEELQIIRKGKKSFLTIKTVNS.

Tyr36 lines the L-tyrosine pocket. Residues 41–50 (PTANSLHIGN) carry the 'HIGH' region motif. L-tyrosine-binding residues include Tyr165 and Gln169. A 'KMSKS' region motif is present at residues 225–229 (KMGKT). Lys228 is a binding site for ATP. An S4 RNA-binding domain is found at 331 to 394 (TNLIDYLVET…KKSFLTIKTV (64 aa)).

It belongs to the class-I aminoacyl-tRNA synthetase family. TyrS type 1 subfamily. Homodimer.

Its subcellular location is the cytoplasm. It catalyses the reaction tRNA(Tyr) + L-tyrosine + ATP = L-tyrosyl-tRNA(Tyr) + AMP + diphosphate + H(+). Catalyzes the attachment of tyrosine to tRNA(Tyr) in a two-step reaction: tyrosine is first activated by ATP to form Tyr-AMP and then transferred to the acceptor end of tRNA(Tyr). This is Tyrosine--tRNA ligase from Mycoplasma genitalium (strain ATCC 33530 / DSM 19775 / NCTC 10195 / G37) (Mycoplasmoides genitalium).